A 3256-amino-acid chain; its full sequence is Proliferation marker protein Ki-67 (3256 aa).

One can recognise an FHA domain in the interval 27–76; that stretch reads CLFGRGIECDIRIQLPVVSKQHCKIEIHEQEAILHNFSSTNPTQVNGSVI. The interval 101 to 199 is disordered; the sequence is SLQNGRKSTE…RNGRNAADPI (99 aa). The segment covering 107 to 122 has biased composition (basic and acidic residues); sequence KSTEFPRKIREQEPAR. 3 positions are modified to phosphoserine: Ser-125, Ser-128, and Ser-166. Residues 161-173 show a composition bias toward basic and acidic residues; the sequence is NVKEDSTADDSKD. Polar residues predominate over residues 174–183; that stretch reads SVAQGTTNVH. Lys-245 participates in a covalent cross-link: Glycyl lysine isopeptide (Lys-Gly) (interchain with G-Cter in SUMO2). Phosphoserine is present on residues Ser-264, Ser-296, and Ser-308. Disordered stretches follow at residues 271 to 426 and 513 to 542; these read ATEK…RGSI and RPEL…LVMH. Positions 314 to 324 are enriched in basic and acidic residues; the sequence is DQNKGKGRDVE. Phosphothreonine occurs at positions 328 and 347. A compositionally biased stretch (polar residues) spans 349-358; it reads VQYSQQQNSP. 3 positions are modified to phosphoserine: Ser-352, Ser-357, and Ser-374. Position 401 is a phosphothreonine (Thr-401). Ser-411 carries the post-translational modification Phosphoserine. Positions 414 to 425 are enriched in polar residues; the sequence is KPENLSSKTRGS. Residues 495–678 are positively charged patch (CP); sequence ESEGIPLKRR…AKQTQTKVIK (184 aa). The region spanning 502 to 549 is the PP1-binding domain; sequence KRRRVSFGGHLRPELFDENLPPNTPLKRGEAPTKRKSLVMHTPPVLKK. A Phosphoserine modification is found at Ser-538. A Phosphothreonine modification is found at Thr-543. A disordered region spans residues 575-632; the sequence is SLVISPPAPSPRKTPVASDQRRRSCKTAPASSSKSQTEVPKRGGRKSGNLPSKRVSIS. 2 positions are modified to phosphoserine: Ser-579 and Ser-584. Residues 603 to 612 show a composition bias toward polar residues; that stretch reads PASSSKSQTE. Position 648 is a phosphoserine (Ser-648). The tract at residues 674 to 707 is disordered; the sequence is TKVIKHGPQRSMNKRQRRPATPKKPVGEVHSQFS. Residues 676–694 are compositionally biased toward basic residues; sequence VIKHGPQRSMNKRQRRPAT. At Thr-761 the chain carries Phosphothreonine. Residues 853 to 886 are disordered; the sequence is SLETKTSDTETEPSKTVSTANRSGRSTEFRNIQK. Ser-859 bears the Phosphoserine mark. Residues 866-882 are compositionally biased toward polar residues; it reads SKTVSTANRSGRSTEFR. Residues 1000–2928 are 16 X 122 AA approximate repeats; that stretch reads GKITKMPCQS…ASFQELSQTP (1929 aa). K167R repeat units lie at residues 1001–1112, 1123–1234, 1245–1356, 1367–1477, 1488–1597, and 1609–1720; these read KITK…FQTP, KTTK…FQTP, KTTK…LFQT, and KTAK…FQTP. Thr-1017 is modified (phosphothreonine). Residues Lys-1022 and Lys-1035 each participate in a glycyl lysine isopeptide (Lys-Gly) (interchain with G-Cter in SUMO2) cross-link. The disordered stretch occupies residues 1045–1073; the sequence is TRTSGETTHTHREPAGDGKSIRTFKESPK. Residues 1052-1072 are compositionally biased toward basic and acidic residues; sequence THTHREPAGDGKSIRTFKESP. A Phosphoserine modification is found at Ser-1071. Thr-1091 is subject to Phosphothreonine. Residue Lys-1093 forms a Glycyl lysine isopeptide (Lys-Gly) (interchain with G-Cter in SUMO1); alternate linkage. Lys-1093 participates in a covalent cross-link: Glycyl lysine isopeptide (Lys-Gly) (interchain with G-Cter in SUMO2); alternate. Position 1098 is a phosphoserine (Ser-1098). The segment at 1109–1151 is disordered; sequence FQTPGPSEESMTDEKTTKIACKSPPPESVDTPTSTKQWPKRSL. Thr-1111 bears the Phosphothreonine mark. At Ser-1131 the chain carries Phosphoserine. Thr-1139 carries the phosphothreonine modification. The residue at position 1142 (Ser-1142) is a Phosphoserine. Thr-1167 carries the post-translational modification Phosphothreonine. Ser-1169 carries the phosphoserine modification. The residue at position 1176 (Thr-1176) is a Phosphothreonine. Residues Lys-1185 and Lys-1188 each participate in a glycyl lysine isopeptide (Lys-Gly) (interchain with G-Cter in SUMO2) cross-link. At Thr-1193 the chain carries Phosphothreonine. Residue Ser-1207 is modified to Phosphoserine. Position 1233 is a phosphothreonine (Thr-1233). A disordered region spans residues 1246–1276; it reads TTKIPCDSPQSDPVDTPTSTKQRPKRSIRKA. A phosphoserine mark is found at Ser-1253 and Ser-1256. Polar residues predominate over residues 1253–1266; that stretch reads SPQSDPVDTPTSTK. A phosphothreonine mark is found at Thr-1261, Thr-1298, Thr-1315, and Thr-1327. The interval 1323 to 1518 is disordered; the sequence is TENLTGSKRR…PQSKRSLRKV (196 aa). The residue at position 1329 (Ser-1329) is a Phosphoserine. Position 1335 is a phosphothreonine (Thr-1335). Lys-1337 is covalently cross-linked (Glycyl lysine isopeptide (Lys-Gly) (interchain with G-Cter in SUMO2)). Position 1355 is a phosphothreonine (Thr-1355). Position 1376 is a phosphoserine (Ser-1376). Position 1383 is a phosphothreonine (Thr-1383). Ser-1386 carries the post-translational modification Phosphoserine. Composition is skewed to basic and acidic residues over residues 1394-1406 and 1418-1442; these read PLEK…ELSA and THTD…KQKL. A phosphothreonine mark is found at Thr-1420 and Thr-1437. Phosphoserine is present on Ser-1496. Position 1503 is a phosphothreonine (Thr-1503). Phosphoserine is present on Ser-1506. A Phosphothreonine modification is found at Thr-1540. Phosphotyrosine is present on Tyr-1552. Thr-1557 and Thr-1569 each carry phosphothreonine. Phosphoserine occurs at positions 1571 and 1617. The segment at 1597–1675 is disordered; sequence TRGHTEESMT…PTGDGKSMKA (79 aa). At Lys-1639 the chain carries N6-acetyllysine. Lys-1643 is covalently cross-linked (Glycyl lysine isopeptide (Lys-Gly) (interchain with G-Cter in SUMO2)). Residues 1660-1672 show a composition bias toward basic and acidic residues; it reads THTHTEPTGDGKS. Ser-1679 and Ser-1689 each carry phosphoserine. Disordered regions lie at residues 1689–1708, 1717–1765, 1771–1790, 1801–1824, and 1839–1886; these read SLTG…EVPE, FQTP…ADTE, FRKQ…PAVG, TPVQ…TRKE, and FQTP…KADV. Residue Lys-1703 forms a Glycyl lysine isopeptide (Lys-Gly) (interchain with G-Cter in SUMO2) linkage. Thr-1719 carries the phosphothreonine modification. Position 1721 is a phosphoserine (Ser-1721). Basic and acidic residues predominate over residues 1722–1733; the sequence is HTKESMTNEKTT. K167R repeat units follow at residues 1731–1842, 1854–1964, 1975–2086, 2097–2204, and 2215–2326; these read KTTK…FQTP, TKKI…FQTP, and KITE…FQTP. A Phosphoserine modification is found at Ser-1740. A phosphothreonine mark is found at Thr-1747, Thr-1764, Thr-1784, and Thr-1801. A Phosphoserine modification is found at Ser-1815. Thr-1841 bears the Phosphothreonine mark. Phosphoserine is present on residues Ser-1861 and Ser-1864. Over residues 1861 to 1874 the composition is skewed to polar residues; that stretch reads SPQSDPADTPTNTK. Thr-1869, Thr-1897, Thr-1906, and Thr-1923 each carry phosphothreonine. Ser-1937 bears the Phosphoserine mark. Residues 1961–2002 are disordered; the sequence is FQTPGHTEESMTDDKITEVSCKSPQPDPVKTPTSSKQRLKIS. Thr-1963 is subject to Phosphothreonine. Residues 1966-1977 show a composition bias toward basic and acidic residues; that stretch reads HTEESMTDDKIT. Ser-1983 is subject to Phosphoserine. At Lys-2005 the chain carries N6-acetyllysine. Lys-2009 is covalently cross-linked (Glycyl lysine isopeptide (Lys-Gly) (interchain with G-Cter in SUMO1); alternate). Residue Lys-2009 forms a Glycyl lysine isopeptide (Lys-Gly) (interchain with G-Cter in SUMO2); alternate linkage. The segment at 2017 to 2192 is disordered; sequence KLTQTSGKTT…TPKGKAQPLE (176 aa). Thr-2028 and Thr-2065 each carry phosphothreonine. Composition is skewed to basic and acidic residues over residues 2028 to 2046 and 2061 to 2070; these read THRE…KESA and RWPRTPKEEA. Residue Lys-2067 forms a Glycyl lysine isopeptide (Lys-Gly) (interchain with G-Cter in SUMO1); alternate linkage. Residue Lys-2067 forms a Glycyl lysine isopeptide (Lys-Gly) (interchain with G-Cter in SUMO2); alternate linkage. At Ser-2072 the chain carries Phosphoserine. Phosphothreonine is present on Thr-2085. A compositionally biased stretch (basic and acidic residues) spans 2087 to 2099; sequence DHTEESTTDDKTT. Ser-2105 carries the phosphoserine modification. At Thr-2113 the chain carries Phosphothreonine. Phosphoserine is present on residues Ser-2116 and Ser-2135. Positions 2145–2168 are enriched in basic and acidic residues; sequence HTDKVPGDEDKGINVFRETAKQKL. Residues Thr-2146, Thr-2163, and Thr-2203 each carry the phosphothreonine modification. A disordered region spans residues 2205 to 2400; that stretch reads ICTDKPTTHE…KPAVSDEKNI (196 aa). Ser-2223 is modified (phosphoserine). Phosphothreonine occurs at positions 2231 and 2233. Phosphoserine is present on Ser-2239. Thr-2259 is modified (phosphothreonine). Phosphoserine is present on Ser-2261. A phosphothreonine mark is found at Thr-2268, Thr-2285, Thr-2325, Thr-2328, and Thr-2333. K167R repeat units lie at residues 2336-2447, 2458-2569, 2580-2688, 2700-2805, and 2819-2928; these read KTTK…FQTP, KITE…FSAP, KNTK…LSET, KATK…GFKD, and KTTK…SQTP. A Phosphoserine modification is found at Ser-2344. Residues Thr-2352 and Thr-2389 each carry the phosphothreonine modification. Position 2395 is a phosphoserine (Ser-2395). Phosphothreonine is present on Thr-2406. Position 2420 is a phosphoserine (Ser-2420). 2 positions are modified to phosphothreonine: Thr-2426 and Thr-2446. Residues 2445-2480 are disordered; that stretch reads QTPGHTEESMTDDKITEVSCKSPQPESFKTSRSSKQ. The segment covering 2449-2460 has biased composition (basic and acidic residues); it reads HTEESMTDDKIT. Residues 2463–2475 show a composition bias toward polar residues; the sequence is SCKSPQPESFKTS. Ser-2466 is subject to Phosphoserine. Lys-2492 is covalently cross-linked (Glycyl lysine isopeptide (Lys-Gly) (interchain with G-Cter in SUMO1)). The tract at residues 2497-2521 is disordered; that stretch reads AVSKLTRTSGETTQTHTEPTGDSKS. Positions 2501-2514 are enriched in polar residues; it reads LTRTSGETTQTHTE. Phosphoserine is present on residues Ser-2505, Ser-2528, and Ser-2588. The tract at residues 2570–3256 is disordered; that stretch reads GHTEESMTID…TRSHRDSEDI (687 aa). 3 stretches are compositionally biased toward basic and acidic residues: residues 2609–2618, 2632–2644, and 2660–2675; these read RKEVKEELSA, THKE…EGIK, and EPSR…KAQP. Residue Lys-2613 forms a Glycyl lysine isopeptide (Lys-Gly) (interchain with G-Cter in SUMO1); alternate linkage. Lys-2613 participates in a covalent cross-link: Glycyl lysine isopeptide (Lys-Gly) (interchain with G-Cter in SUMO2); alternate. Residue Ser-2638 is modified to Phosphoserine. Residues 2685–2696 show a composition bias toward polar residues; that stretch reads LSETSGHTQESL. Ser-2708 is subject to Phosphoserine. A Glycyl lysine isopeptide (Lys-Gly) (interchain with G-Cter in SUMO1); alternate cross-link involves residue Lys-2734. Residue Lys-2734 forms a Glycyl lysine isopeptide (Lys-Gly) (interchain with G-Cter in SUMO2); alternate linkage. Composition is skewed to basic and acidic residues over residues 2751-2770 and 2810-2821; these read DADK…KESA and HTEESMTDDKTT. Phosphoserine occurs at positions 2827, 2828, and 2838. Lys-2852 is covalently cross-linked (Glycyl lysine isopeptide (Lys-Gly) (interchain with G-Cter in SUMO1); alternate). A Glycyl lysine isopeptide (Lys-Gly) (interchain with G-Cter in SUMO2); alternate cross-link involves residue Lys-2852. The span at 2869–2881 shows a compositional bias: basic and acidic residues; the sequence is THTDKEPVGEGKG. A compositionally biased stretch (polar residues) spans 2941-2951; that stretch reads SFTSAPKQTPD. Lys-2967 is covalently cross-linked (Glycyl lysine isopeptide (Lys-Gly) (interchain with G-Cter in SUMO2)). Residues 2982–2991 are compositionally biased toward polar residues; sequence KSQSKSNTSL. At Lys-2986 the chain carries N6-acetyllysine. The segment covering 3029 to 3039 has biased composition (basic residues); sequence KKQRVAPRARG. 3034-3041 is a binding site for ATP; it reads APRARGKS. Phosphoserine is present on Ser-3041. 2 stretches are compositionally biased toward basic and acidic residues: residues 3071–3080 and 3113–3124; these read KTNKEEHKLQ and ERIEINRNEKKP. The residue at position 3128 (Ser-3128) is a Phosphoserine. Over residues 3138-3154 the composition is skewed to basic and acidic residues; that stretch reads DGARKPIPRDKVTENKR. The span at 3207 to 3223 shows a compositional bias: polar residues; the sequence is SQPAASTLESKSVQRVT. Basic and acidic residues predominate over residues 3228–3241; sequence RCAENPKKAEDNVC.

Interacts with KIF15. Interacts (via the FHA domain) with NIFK. Interacts with PPP1CC. Component of a complex at least composed of ZNF335, HCFC1, CCAR2, EMSY, MKI67, RBBP5, ASH2L and WDR5; the complex is formed as a result of interactions between components of a nuclear receptor-mediated transcription complex and a histone methylation complex. Interacts with ZNF335. Post-translationally, hyperphosphorylated by CDK1 in mitosis; hyperphosphorylatiom prevents undergoing liquid-liquid phase separation. Dephosphorylated by PPP1CC at the onset of anaphase. Dephosphorylated by protein phosphatase 2A (PP2A) at the onset of anaphase. Dephosphorylation by protein phosphatase 2A (PP2A) and simultaneous exposure of the positively charged patch (CP) during mitotic exit induce the RNA-dependent formation of a liquid-like condensed phase on the chromosome surface. In terms of processing, ubiquitinated by the APC/C complex after neuronal progenitors exit mitosis during brain development, leading to clearance from constitutive heterochromatin.

The protein resides in the chromosome. It localises to the nucleus. Its subcellular location is the nucleolus. Its function is as follows. Protein that associates with the surface of mitotic chromosomes and acts both as a chromosome repellent during early mitosis and chromosome attractant during late mitosis. Required to maintain individual mitotic chromosomes dispersed in the cytoplasm following nuclear envelope disassembly. During early mitosis, relocalizes from nucleoli to the chromosome surface where it forms extended brush structures that cover a substantial fraction of the chromosome surface. The MKI67 brush structure prevents chromosomes from collapsing into a single chromatin mass by forming a steric and electrostatic charge barrier: the protein has a high net electrical charge and acts as a surfactant, dispersing chromosomes and enabling independent chromosome motility. During mitotic anaphase, the MKI67 brush structure collapses and MKI67 switches from a chromosome repellent to a chromosome attractant to promote chromosome clustering and facilitate the exclusion of large cytoplasmic particles from the future nuclear space. Mechanistically, dephosphorylation during mitotic exit and simultaneous exposure of a conserved basic patch induce the RNA-dependent formation of a liquid-like condensed phase on the chromosome surface, promoting coalescence of neighboring chromosome surfaces and clustering of chromosomes. Binds premature ribosomal RNAs during anaphase; promoting liquid-liquid phase separation. Binds DNA, with a preference for supercoiled DNA and AT-rich DNA. Does not contribute to the internal structure of mitotic chromosomes. May play a role in chromatin organization; it is however unclear whether it plays a direct role in chromatin organization or whether it is an indirect consequence of its function in mitotic chromosome. This Homo sapiens (Human) protein is Proliferation marker protein Ki-67.